Reading from the N-terminus, the 85-residue chain is Kappa-theraphotoxin-Gr1a (85 aa).

An N-terminal signal peptide occupies residues 1–21 (MKTSVFAAILGLALFAVLCSG). The propeptide occupies 22–49 (SELQEKDLKETLLSAIMETALEAQPEER). Cystine bridges form between Cys51–Cys65, Cys58–Cys70, and Cys64–Cys77. Positions 53–55 (YLF) are involved in active face.

Belongs to the neurotoxin 10 (Hwtx-1) family. 09 (HaTx) subfamily. Expressed by the venom gland.

It is found in the secreted. Its function is as follows. Inhibits Kv2.1/KCNB1 and Kv4.2/KCND2 voltage-gated potassium channels. Acts as a gating modifier by shifting channel openings to more depolarized voltages and acts via the occupancy of multiple binding sites on the channel. The toxin binding sites are situated on the S3-S4 extracellular linker of the channel. At least two hanatoxin molecules can occupy the Kv2.1/KCNB1 channel, and maybe more (three or four). Can also inhibit calcium channels (Cav2.1/CACNA1A). Needs to partition into the membrane in order to bind to the channel. This is Kappa-theraphotoxin-Gr1a from Grammostola rosea (Chilean rose tarantula).